Here is a 617-residue protein sequence, read N- to C-terminus: 1-deoxy-D-xylulose-5-phosphate synthase (617 aa).

Thiamine diphosphate contacts are provided by residues His76 and 117–119 (GHS). Asp148 contacts Mg(2+). Residues 149–150 (GA), Asn177, Tyr285, and Glu366 contribute to the thiamine diphosphate site. Asn177 contacts Mg(2+).

It belongs to the transketolase family. DXPS subfamily. In terms of assembly, homodimer. Requires Mg(2+) as cofactor. Thiamine diphosphate serves as cofactor.

The catalysed reaction is D-glyceraldehyde 3-phosphate + pyruvate + H(+) = 1-deoxy-D-xylulose 5-phosphate + CO2. Its pathway is metabolic intermediate biosynthesis; 1-deoxy-D-xylulose 5-phosphate biosynthesis; 1-deoxy-D-xylulose 5-phosphate from D-glyceraldehyde 3-phosphate and pyruvate: step 1/1. Functionally, catalyzes the acyloin condensation reaction between C atoms 2 and 3 of pyruvate and glyceraldehyde 3-phosphate to yield 1-deoxy-D-xylulose-5-phosphate (DXP). The chain is 1-deoxy-D-xylulose-5-phosphate synthase from Mannheimia succiniciproducens (strain KCTC 0769BP / MBEL55E).